The primary structure comprises 436 residues: Cyclic GMP-AMP synthase (436 aa).

112–117 (QGSFQY) provides a ligand contact to GTP. Residues Asp-131 and Asp-133 each contribute to the Mg(2+) site. Arg-182 serves as a coordination point for ATP. Asp-193 is a binding site for Mg(2+). ATP is bound at residue Ser-259. GTP-binding residues include Lys-287, Ser-301, and Asp-348. Disordered regions lie at residues 339 to 358 (RGVE…PSYK) and 417 to 436 (AQEP…MVSG). The span at 419-436 (EPSSASKPEKISSTMVSG) shows a compositional bias: polar residues. A Glycyl lysine isopeptide (Gly-Lys) (interchain with K-? in acceptor proteins) cross-link involves residue Gly-436.

The protein belongs to the CD-NTase family. A01 subfamily. Monomer. Interacts with Cap2 in the presence and absence of phage T2. A Cap2 dimer is bound on either side by a DncV monomer. Mg(2+) is required as a cofactor. Post-translationally, in bacteria expressing capV-cdnD-cap2, this protein is conjugated to a number of other proteins (by Cap2 via this protein's C-terminal Gly residue), many of which are involved in metabolism. More conjugated protein is found in the absence of Cap3.

The enzyme catalyses GTP + ATP = 3',3'-cGAMP + 2 diphosphate. With respect to regulation, primed for activation by Cap2 which conjugates it to cellular proteins; priming is target protein-specific (green fluorescent protein does not activate the enzyme), but which protein(s) activate is unclear. Enzymatic activity of DncV is inhibited by folate-like molecules, such as 5-methyltetrahydrofolate di-glutamate and 5-methyltetrahydrofolate, suggesting the existence of a signaling pathway that links folate-like metabolism cofactors to the regulation of cyclic dinucleotide second messenger synthesis. Lacks a regulatory loop and is constitutively activated. In terms of biological role, cyclic nucleotide synthase (second messenger synthase) of a CBASS antivirus system. CBASS (cyclic oligonucleotide-based antiphage signaling system) provides immunity against bacteriophages. The CD-NTase protein (DncV, this protein) synthesizes cyclic nucleotides in response to infection; these serve as specific second messenger signals. The signals activate a diverse range of effectors, leading to bacterial cell death and thus abortive phage infection. A type II-A(GA) CBASS system. Functionally, catalyzes the synthesis of 3',3'-cyclic GMP-AMP (cGAMP), a second messenger in cell signal transduction, from GTP and ATP in response to phage infection. Also able to produce c-di-AMP and c-di-GMP from ATP and GTP, respectively; however, cGAMP is the dominant molecule produced by DncV in vivo, contrary to the 2'3'-cGAMP produced by eukaryotes. Is required for efficient V.cholerae intestinal colonization, and down-regulates the colonization-influencing process of chemotaxis. Is not active with dATP, TTP, UTP or CTP. Its product controls the activity of cGAMP-activated phospholipase CapV, a patatin-like lipase that is a direct cGAMP receptor encoded in the dncV operon. Protects E.coli against phage infection. When the CBASS operon (capV-dncV-cap2-cap3) is introduced in E.coli MG1655 there is about 100-fold protection against phages P1 and T2. When the operon is introduced in E.coli MG1655 there is a more than 10(3) decrease in the efficiency of T2 plaque formation. Protects 100-fold against phage T5, offers no protection against T7. When the operon is introduced in E.coli MG1655 it protects against phages T2, T4, T5 and T6. Another paper shows the operon confers protection against phages P1, T2, T5 and T6 but not T4 or lambda. The polypeptide is Cyclic GMP-AMP synthase (Vibrio cholerae serotype O1 (strain ATCC 39315 / El Tor Inaba N16961)).